The sequence spans 302 residues: Acetaldehyde dehydrogenase (302 aa).

An NAD(+)-binding site is contributed by 12-15 (SGNI). Catalysis depends on Cys127, which acts as the Acyl-thioester intermediate. Residues 158–166 (SAGPGTRQN) and Asn276 each bind NAD(+).

It belongs to the acetaldehyde dehydrogenase family.

It carries out the reaction acetaldehyde + NAD(+) + CoA = acetyl-CoA + NADH + H(+). The polypeptide is Acetaldehyde dehydrogenase (nahO) (Geobacillus genomosp. 3).